A 130-amino-acid polypeptide reads, in one-letter code: Small ribosomal subunit protein uS8 (130 aa).

This sequence belongs to the universal ribosomal protein uS8 family. As to quaternary structure, part of the 30S ribosomal subunit. Contacts proteins S5 and S12.

Functionally, one of the primary rRNA binding proteins, it binds directly to 16S rRNA central domain where it helps coordinate assembly of the platform of the 30S subunit. The sequence is that of Small ribosomal subunit protein uS8 from Pseudomonas entomophila (strain L48).